The following is an 84-amino-acid chain: U4-theraphotoxin-Hhn1ac (84 aa).

Residues 1–22 (MKVTLIAILTCAAVLVLHTTAA) form the signal peptide. Positions 23 to 47 (EELEESQLMEVGMPDTELAAVDEER) are excised as a propeptide. Cystine bridges form between C51–C65, C55–C76, and C70–C81.

The protein belongs to the neurotoxin 12 (Hwtx-2) family. 02 (Hwtx-2) subfamily. In terms of tissue distribution, expressed by the venom gland.

It localises to the secreted. In terms of biological role, postsynaptic neurotoxin. In Cyriopagopus hainanus (Chinese bird spider), this protein is U4-theraphotoxin-Hhn1ac.